The chain runs to 92 residues: Larval cuticle protein 9 (92 aa).

A signal peptide spans 1-16; that stretch reads MKFVIVLACLLAVVFA. Positions 31 to 92 constitute a Chitin-binding type R&amp;R domain; sequence LLDFNYAYEL…TGYHPKVVEA (62 aa).

Functionally, component of the cuticle of the larva. The chain is Larval cuticle protein 9 (Lcp9) from Drosophila melanogaster (Fruit fly).